Consider the following 397-residue polypeptide: 3-ketoacyl-CoA thiolase, mitochondrial (397 aa).

A mitochondrion; not cleaved-targeting transit peptide spans 1–16 (MALLRGVFIVAAKRTP). Lysine 25 bears the N6-acetyllysine; alternate mark. N6-succinyllysine; alternate is present on lysine 25. Serine 28 is modified (phosphoserine). Lysine 45 carries the post-translational modification N6-succinyllysine. The active-site Acyl-thioester intermediate is cysteine 92. Threonine 119 is subject to Phosphothreonine. Phosphoserine is present on serine 121. Residue tyrosine 127 is modified to Phosphotyrosine. A Phosphothreonine modification is found at threonine 136. N6-acetyllysine; alternate occurs at positions 137, 143, 158, 171, 191, and 209. 6 positions are modified to N6-succinyllysine; alternate: lysine 137, lysine 143, lysine 158, lysine 171, lysine 191, and lysine 209. N6-succinyllysine is present on residues lysine 211, lysine 212, and lysine 214. CoA contacts are provided by arginine 224 and threonine 227. The residue at position 234 (lysine 234) is an N6-acetyllysine; alternate. Position 234 is an N6-succinyllysine; alternate (lysine 234). N6-succinyllysine is present on lysine 240. Position 241 is an N6-acetyllysine (lysine 241). CoA is bound at residue serine 251. N6-acetyllysine occurs at positions 269 and 270. The residue at position 305 (lysine 305) is an N6-acetyllysine; alternate. N6-succinyllysine; alternate is present on lysine 305. Serine 310 is modified (phosphoserine). Residue lysine 312 is modified to N6-acetyllysine; alternate. Position 312 is an N6-succinyllysine; alternate (lysine 312). N6-acetyllysine is present on lysine 340. At serine 344 the chain carries Phosphoserine. Lysine 375 is subject to N6-acetyllysine. Cysteine 382 acts as the Proton donor/acceptor in catalysis.

The protein belongs to the thiolase-like superfamily. Thiolase family. Homotetramer. Interacts with BNIP3.

The protein localises to the mitochondrion. The catalysed reaction is an acyl-CoA + acetyl-CoA = a 3-oxoacyl-CoA + CoA. The enzyme catalyses 2 acetyl-CoA = acetoacetyl-CoA + CoA. It catalyses the reaction acetyl-CoA + H2O = acetate + CoA + H(+). It carries out the reaction propanoyl-CoA + H2O = propanoate + CoA + H(+). The catalysed reaction is butanoyl-CoA + H2O = butanoate + CoA + H(+). The enzyme catalyses hexanoyl-CoA + H2O = hexanoate + CoA + H(+). It catalyses the reaction octanoyl-CoA + H2O = octanoate + CoA + H(+). It carries out the reaction decanoyl-CoA + H2O = decanoate + CoA + H(+). The catalysed reaction is dodecanoyl-CoA + H2O = dodecanoate + CoA + H(+). The enzyme catalyses tetradecanoyl-CoA + H2O = tetradecanoate + CoA + H(+). It catalyses the reaction hexadecanoyl-CoA + H2O = hexadecanoate + CoA + H(+). It functions in the pathway lipid metabolism; fatty acid beta-oxidation. In the production of energy from fats, this is one of the enzymes that catalyzes the last step of the mitochondrial beta-oxidation pathway, an aerobic process breaking down fatty acids into acetyl-CoA. Using free coenzyme A/CoA, catalyzes the thiolytic cleavage of medium- to long-chain unbranched 3-oxoacyl-CoAs into acetyl-CoA and a fatty acyl-CoA shortened by two carbon atoms. Also catalyzes the condensation of two acetyl-CoA molecules into acetoacetyl-CoA and could be involved in the production of ketone bodies. Also displays hydrolase activity on various fatty acyl-CoAs. Thereby, could be responsible for the production of acetate in a side reaction to beta-oxidation. Abolishes BNIP3-mediated apoptosis and mitochondrial damage. The polypeptide is 3-ketoacyl-CoA thiolase, mitochondrial (Acaa2) (Mus musculus (Mouse)).